The primary structure comprises 67 residues: Large ribosomal subunit protein uL30 (67 aa).

The protein belongs to the universal ribosomal protein uL30 family. Part of the 50S ribosomal subunit.

The polypeptide is Large ribosomal subunit protein uL30 (Thermotoga petrophila (strain ATCC BAA-488 / DSM 13995 / JCM 10881 / RKU-1)).